We begin with the raw amino-acid sequence, 623 residues long: Prothrombin (623 aa).

The signal sequence occupies residues 1–24 (MAHVRGLQLPGCLALAALCTLVHS). Positions 25-43 (QHVFLAPQQALSLLQRVRR) are excised as a propeptide. The 47-residue stretch at 44-90 (ANSVFLEEVRKGNLERECVEETCSYEEAFEALESSTATDVFWAKYTA) folds into the Gla domain. 4-carboxyglutamate is present on residues Glu-50, Glu-51, Glu-58, Glu-60, Glu-63, Glu-64, Glu-69, Glu-70, Glu-73, and Glu-76. A disulfide bridge connects residues Cys-61 and Cys-66. Disulfide bonds link Cys-91–Cys-104, Cys-109–Cys-187, Cys-130–Cys-170, Cys-158–Cys-182, Cys-214–Cys-292, Cys-235–Cys-275, Cys-263–Cys-287, Cys-337–Cys-483, Cys-392–Cys-408, Cys-537–Cys-551, and Cys-565–Cys-595. Kringle domains are found at residues 108 to 187 (NCAE…IPVC) and 213 to 292 (QCVP…LNYC). Asn-122 and Asn-144 each carry an N-linked (GlcNAc...) asparagine glycan. A Peptidase S1 domain is found at 365–619 (IVEGSDAEIG…LKKWIQKVID (255 aa)). His-407 functions as the Charge relay system in the catalytic mechanism. Asn-417 is a glycosylation site (N-linked (GlcNAc...) asparagine). The active-site Charge relay system is Asp-463. The interval 552 to 574 (AGYKPDEGKRGDACEGDSGGPFV) is high affinity receptor-binding region which also known as the TP508 peptide. Ser-569 (charge relay system) is an active-site residue.

This sequence belongs to the peptidase S1 family. As to quaternary structure, heterodimer (named alpha-thrombin) of a light and a heavy chain; disulfide-linked. Forms a heterodimer with SERPINA5. In plasma, interacts (via N-terminus) with alpha-1-microglobulin; this interaction does not prevent the activation of prothrombin to thrombin. Post-translationally, the gamma-carboxyglutamyl residues, which bind calcium ions, result from the carboxylation of glutamyl residues by a microsomal enzyme, the vitamin K-dependent carboxylase. The modified residues are necessary for the calcium-dependent interaction with a negatively charged phospholipid surface, which is essential for the conversion of prothrombin to thrombin. In terms of processing, in the penultimate step of the coagulation cascade, prothrombin is converted to thrombin by the prothrombinase complex composed of factor Xa (F10), cofactor Va (F5), and phospholipids. This activation requires factor Xa-catalyzed sequential cleavage at 2 sites, Arg-315 and Arg-364, along 2 possible pathways. In the first pathway, the first cleavage occurs at Arg-315, leading to the formation of the inactive intermediate prethrombin-2. This pathway preferentially occurs on platelets and in the absence of cofactor Va. In the second pathway, the first cleavage occurs at Arg-364, which separates protease domain into 2 chains that remain connected through a disulfide bond and generates the active intermediate meizothrombin. The presence of cofactor Va directs activation along the meizothrombin pathway and greatly accelerates the rate of cleavage at Arg-364, but has a smaller effect on the cleavage of meizothrombin at Arg-315. Meizothrombin accumulates as an intermediate when prothrombinase is assembled on the membrane of red blood cells.

It carries out the reaction Selective cleavage of Arg-|-Gly bonds in fibrinogen to form fibrin and release fibrinopeptides A and B.. With respect to regulation, activity is promoted in the presence of negatively charged surfaces, such as polyphosphate and dextran sulfate. Inhibited by SERPINA5. In terms of biological role, thrombin, which cleaves bonds after Arg and Lys, converts fibrinogen to fibrin and activates factors V, VII, VIII, XIII, and, in complex with thrombomodulin, protein C. Functions in blood homeostasis, inflammation and wound healing. Activates coagulation factor XI (F11); activation is promoted by the contact with negatively charged surfaces. Triggers the production of pro-inflammatory cytokines, such as MCP-1/CCL2 and IL8/CXCL8, in endothelial cells. The protein is Prothrombin (F2) of Pongo abelii (Sumatran orangutan).